The sequence spans 285 residues: Probable methyltransferase ltbC (285 aa).

The segment at 1 to 22 (MASTGQTNNYKQGYSSQTVETQ) is disordered.

The protein belongs to the class I-like SAM-binding methyltransferase superfamily. In terms of assembly, monomer.

In terms of biological role, probable methyltransferase; part of the gene cluster that mediates the biosynthesis of luteodienoside A, a glycosylated polyketide consisting of an unusual 1-O-beta-D-glucopyranosyl-myo-inositol (glucinol) ester of 3-hydroxy-2,2,4-trimethylocta-4,6-dienoic acid. The HR-PKS ltbA produces the trimethylated polyketide chain from acetyl-CoA, malonyl-CoA and S-adenosylmethionine (SAM), and the ltbA cAT domain then uses glucinol produced by the glycosyltransferase ltbB as an offloading substrate to release luteodienoside A. Since ltbA and ltbB are sufficient for the biosynthesis of luteodienoside A, the functions of the methyltransferase ltbC and the FAD-binding monooxygenase ltbD within the pathway remain obscur. This Aspergillus luteorubrus protein is Probable methyltransferase ltbC.